A 420-amino-acid polypeptide reads, in one-letter code: Probable protein phosphatase 2C 76 (420 aa).

The PPM-type phosphatase domain maps to 101-347 (SCGYCSFRGK…DNITCIVVKF (247 aa)). Positions 137, 138, 299, and 338 each coordinate Mn(2+). A disordered region spans residues 353–420 (ESPKIETNAM…PETKGEKAGE (68 aa)). The segment covering 403 to 420 (PDPKPETEPETKGEKAGE) has biased composition (basic and acidic residues).

It belongs to the PP2C family. The cofactor is Mg(2+). Mn(2+) is required as a cofactor.

The catalysed reaction is O-phospho-L-seryl-[protein] + H2O = L-seryl-[protein] + phosphate. The enzyme catalyses O-phospho-L-threonyl-[protein] + H2O = L-threonyl-[protein] + phosphate. This is Probable protein phosphatase 2C 76 from Arabidopsis thaliana (Mouse-ear cress).